Here is a 392-residue protein sequence, read N- to C-terminus: Monooxygenase AgnR1 (392 aa).

A signal peptide spans 1–20 (MSAPQKCAAVVVGAGPAGLA). N-linked (GlcNAc...) asparagine glycosylation is present at Asn-134.

Its function is as follows. Monooxygenase; part of the gene cluster that mediates the biosynthesis of agnestins, dihydroxy-xanthone metabolites. The pathway begins with the assembly and cyclization of atrochrysone thioester by the non-reducing polyketide synthase Agnpks1. The atrochrysone carboxyl ACP thioesterase AgnL7 then breaks the thioester bond and releases the atrochrysone carboxylic acid as the first enzyme-free intermediate. The decarboxylase AgnL1 then catalyzes the concerted decarboxylation-elimination required to convert atochrysone carboxylic acid into emodin anthrone, which is further oxidized to emodin by the anthrone oxygenase AgnL2. Emodin then undergoes reduction catalyzed by the oxidoreductase AgnL4 to yield the dihydroquinone tautomer which is the substrate for reduction by the short chain dehydrogenase AgnL6 reduction to produce hydroxyketone, followed by AgnL8 dehydration and likely spontaneous autoxidation to chrysophanol. Baeyer-Villiger oxidation by the oxidase AgnL3 leads to monodictyphenone via cleavage of the C-10/C-10a bond of chrysophanol. Alternative cleavage at the C-4a/C-10 bond of chrysophanol also leads to the formation some cephalone F. Further conversion to agnestins A and B, requires reduction to dihydro-monodictyphenone, oxidation to agnestin C probably via an epoxide, and rearrangement to either agnestin A or agnestin B directly, although agnestin A or agnestin B can also interconvert. Within the cluster, AgnR1 is the only unassigned oxidoreductase present which could be involved in this conversion. However, AgnR1 seems not to be involved in this step, and thus genes involved in the proposed oxidation/reduction may be located elsewhere on the genome. Further agnestin A derivatives are probably formed by spontaneous decarboxylations, dehydrations and methanolysis reactions. This is Monooxygenase AgnR1 from Paecilomyces divaricatus (Penicillium divaricatum).